Consider the following 74-residue polypeptide: Protein SlyX homolog (74 aa).

The interval 54–74 is disordered; that stretch reads QDRNPDAQEPYSLRDEIPPHY.

This sequence belongs to the SlyX family.

The sequence is that of Protein SlyX homolog from Neisseria gonorrhoeae (strain ATCC 700825 / FA 1090).